The primary structure comprises 349 residues: 11-beta-hydroxysteroid dehydrogenase 1A (349 aa).

The chain crosses the membrane as a helical; Signal-anchor for type II membrane protein span at residues Leu10–Phe30. NADP(+)-binding positions include Gly54–Arg80 and Asp105. Ser184 serves as a coordination point for substrate. The Proton acceptor role is filled by Tyr197. Residues Tyr197–Lys201 and Lys201 contribute to the NADP(+) site.

It belongs to the short-chain dehydrogenases/reductases (SDR) family. In terms of tissue distribution, expressed in the above-ground part of seedlings, especially in the vascular tissues. Also detected in the buds and silique pedicels. Highly induced in oil-accumulating tissues of maturing seeds.

Its subcellular location is the lipid droplet. It is found in the membrane. It carries out the reaction an 11beta-hydroxysteroid + NADP(+) = an 11-oxosteroid + NADPH + H(+). It catalyses the reaction 17beta-estradiol + NADP(+) = estrone + NADPH + H(+). The enzyme catalyses corticosterone + NADP(+) = 11-dehydrocorticosterone + NADPH + H(+). The catalysed reaction is cortisone + NADPH + H(+) = cortisol + NADP(+). In terms of biological role, catalyzes 11-beta, 17-beta-hydroxysteroid and reduces 17-beta-ketosteroids. Involved in regulating plant growth and development, probably promoting or mediating brassinosteroid effects. Plays a role during seed maturation. This Arabidopsis thaliana (Mouse-ear cress) protein is 11-beta-hydroxysteroid dehydrogenase 1A (HSD1).